Consider the following 723-residue polypeptide: Polyribonucleotide nucleotidyltransferase (723 aa).

Mg(2+)-binding residues include Asp488 and Asp494. The KH domain maps to 555 to 614 (PRMITMKIHPDKIREVIGKGGSTIQALTKETGTTIDIQEDGTITIASTSTEGMAEAKRRI). An S1 motif domain is found at 624-692 (GKIYAGTVLK…EKGRLRLSLK (69 aa)). Residues 701–723 (SISPINAGESAAPAAPAGGSEQQ) form a disordered region. Over residues 707-723 (AGESAAPAAPAGGSEQQ) the composition is skewed to low complexity.

The protein belongs to the polyribonucleotide nucleotidyltransferase family. It depends on Mg(2+) as a cofactor.

The protein localises to the cytoplasm. The catalysed reaction is RNA(n+1) + phosphate = RNA(n) + a ribonucleoside 5'-diphosphate. Its function is as follows. Involved in mRNA degradation. Catalyzes the phosphorolysis of single-stranded polyribonucleotides processively in the 3'- to 5'-direction. The chain is Polyribonucleotide nucleotidyltransferase from Cupriavidus taiwanensis (strain DSM 17343 / BCRC 17206 / CCUG 44338 / CIP 107171 / LMG 19424 / R1) (Ralstonia taiwanensis (strain LMG 19424)).